Here is a 217-residue protein sequence, read N- to C-terminus: MPFARVGALSARHYSNQVDPKVKATSILDSIPGNNVLSKTGVLATGVLGSIYAISNELYIVNDESIVLGVFAAFVVVVAKLGGPGYTSWADGYIENMRNILNTTRDKHTDAVKERIGDVSKLKDVVKTTQDLFAVSKDTVKLEAEVFETKQQVVLAAEAKSVLDSWVRYENSVRQREQKLLTETVISKIEKDLKDPKFQQKILQQSVEDIEKLFAKA.

Residues 1-14 (MPFARVGALSARHY) constitute a mitochondrion transit peptide. A run of 2 helical transmembrane segments spans residues 41–61 (GVLA…LYIV) and 66–86 (IVLG…GPGY).

As to quaternary structure, F-type ATP synthases have 2 components, the catalytic core F(1) and the membrane-embedded component F(0), linked together by a central stalk and a peripheral stalk. The central stalk, also called rotor shaft, is often seen as part of F(1). The peripheral stalk is seen as part of F(0). F(0) contains the membrane channel next to the rotor. F-type ATP synthases form dimers but each monomer functions independently in ATP generation. The dimer consists of 17 different polypeptides: ATP1 (subunit alpha, 3 molecules per monomer, part of F(1)), ATP2 (subunit beta, 3 copies per monomer, part of F(1)), ATP3 (subunit gamma, part of the central stalk), ATP4 (subunit b, part of the peripheral stalk), ATP5/OSCP (subunit 5/OSCP, part of the peripheral stalk), ATP6 (subunit a, part of the peripheral stalk), ATP7 (subunit d, part of the peripheral stalk), ATP8 (subunit 8, part of the peripheral stalk), OLI1 (subunit c, part of the rotor, 10 molecules per monomer), ATP14 (subunit h, part of the peripheral stalk), ATP15 (subunit epsilon, part of the central stalk), ATP16 (subunit delta, part of the central stalk), ATP17 (subunit f, part of the peripheral stalk), ATP18 (subunit i/j, part of the peripheral stalk), ATP19 (subunit k, dimer-specific, at interface between monomers), ATP20 (subunit g, at interface between monomers), TIM11 (subunit e, at interface between monomers).

It is found in the mitochondrion inner membrane. Its function is as follows. Mitochondrial membrane ATP synthase (F(1)F(0) ATP synthase or Complex V) produces ATP from ADP in the presence of a proton gradient across the membrane which is generated by electron transport complexes of the respiratory chain. F-type ATP synthases consist of two structural domains, F(1) - containing the extramembraneous catalytic core, and F(0) - containing the membrane proton channel, linked together by a central stalk and a peripheral stalk. During catalysis, ATP synthesis in the catalytic domain of F(1) is coupled via a rotary mechanism of the central stalk subunits to proton translocation. Part of the complex F(0) domain and the peripheral stalk, which acts as a stator to hold the catalytic alpha/ATP1(3)beta/ATP2(3) subcomplex and subunit a/ATP6 static relative to the rotary elements. In Yarrowia lipolytica (strain CLIB 122 / E 150) (Yeast), this protein is ATP synthase subunit 4, mitochondrial.